The following is a 55-amino-acid chain: Neurotoxin BmKX-A1-S31 (55 aa).

Positions 1–23 (MKIFFAVLVILVLFSMLIWTAYG) are cleaved as a signal peptide. Intrachain disulfides connect C30/C45, C36/C50, and C39/C53.

As to expression, expressed by the venom gland.

Its subcellular location is the secreted. The polypeptide is Neurotoxin BmKX-A1-S31 (Olivierus martensii (Manchurian scorpion)).